Consider the following 76-residue polypeptide: Exodeoxyribonuclease 7 small subunit (76 aa).

Belongs to the XseB family. As to quaternary structure, heterooligomer composed of large and small subunits.

Its subcellular location is the cytoplasm. The enzyme catalyses Exonucleolytic cleavage in either 5'- to 3'- or 3'- to 5'-direction to yield nucleoside 5'-phosphates.. Its function is as follows. Bidirectionally degrades single-stranded DNA into large acid-insoluble oligonucleotides, which are then degraded further into small acid-soluble oligonucleotides. This is Exodeoxyribonuclease 7 small subunit from Geobacter sulfurreducens (strain ATCC 51573 / DSM 12127 / PCA).